Consider the following 590-residue polypeptide: Myo-inositol transporter 3C (590 aa).

At 1–63 the chain is on the cytoplasmic side; the sequence is MSRTPSSLDK…GEDKVTPYLC (63 aa). A helical transmembrane segment spans residues 64 to 86; sequence FLISASAIAGFLFGYDTGVVGVA. The Extracellular portion of the chain corresponds to 87–105; that stretch reads LPLVGTDLGGSVLSSSQQE. Residues 106–126 form a helical membrane-spanning segment; sequence IITAGTTIGAIFGSAILGGWG. Residues 127 to 132 lie on the Cytoplasmic side of the membrane; that stretch reads DRLGRK. The helical transmembrane segment at 133–153 threads the bilayer; it reads VAILIADVFFTVGAVLIAASY. Residues 154-162 are Extracellular-facing; that stretch reads SVPQMIVGR. A helical transmembrane segment spans residues 163 to 183; the sequence is IVLGVGVGGAAAIAPLFITET. Residues 184–192 are Cytoplasmic-facing; it reads APTAVRGRC. The chain crosses the membrane as a helical span at residues 193-213; the sequence is IGVNAFFIPFGQVISEAIGAG. Topologically, residues 214–222 are extracellular; it reads VQDMKNGWR. A helical membrane pass occupies residues 223–243; it reads LLFALGAVPSLFQLILFHYLP. Topologically, residues 244–325 are cytoplasmic; sequence ESPRILILRG…TVSLIQMAGQ (82 aa). The helical transmembrane segment at 326–346 threads the bilayer; that stretch reads LSGFNTLLYYAGTLFSLLGLT. At 347-349 the chain is on the extracellular side; it reads NPA. A helical transmembrane segment spans residues 350–370; sequence LGGLIPAGTNAFFVLVGMTLV. The Cytoplasmic portion of the chain corresponds to 371 to 376; sequence DKVGRR. The helical transmembrane segment at 377–397 threads the bilayer; it reads GLLMFGVPIMLAGLVWNIVAF. At 398–417 the chain is on the extracellular side; it reads HYLCIPTGGLLDTSYKYDTK. Residues 418–438 traverse the membrane as a helical segment; the sequence is LVGIVIGGIVFFTTGFGLTYS. At 439–454 the chain is on the cytoplasmic side; that stretch reads HLAWYQSEFLALEVRS. A helical transmembrane segment spans residues 455–475; it reads VGSGIATTANWVANLVVSVSY. At 476–485 the chain is on the extracellular side; sequence LTELETLTPS. A helical transmembrane segment spans residues 486-506; the sequence is GTYGLYLGFSVVFFIFAVFCY. At 507-590 the chain is on the cytoplasmic side; sequence PETKQLSIDE…NGAKRFPISR (84 aa).

It belongs to the major facilitator superfamily. Sugar transporter (TC 2.A.1.1) family.

The protein resides in the cell membrane. The catalysed reaction is myo-inositol(out) + H(+)(out) = myo-inositol(in) + H(+)(in). In terms of biological role, major transporter for myo-inositol. Plays a role in the traversal of the host blood-brain barrier. This chain is Myo-inositol transporter 3C, found in Cryptococcus neoformans var. grubii serotype A (strain H99 / ATCC 208821 / CBS 10515 / FGSC 9487) (Filobasidiella neoformans var. grubii).